Here is a 149-residue protein sequence, read N- to C-terminus: MTANFSTHVFSPQHCGCDRLTSIDDVRQCLTEYIYWSSYAYRNRQCAGQLYSTLLSFRDDAELVFIDIRELVKNMPWDDVKDCAEIIRCYIPDEQKTIREISAIIGLCAYAATYWGGEDHPTSNSLNALFVMLEMLNYVDYNIIFRRMN.

Belongs to the orthopoxvirus OPG200 family. Homodimers. Interacts with host IKBKB; this interaction inhibits host NF-kappa-B activation.

In terms of biological role, contributes to virulence by binding to the host IKBKB subunit of the IKK complex and preventing host NF-kappa-B activation in response to pro-inflammatory stimuli such as TNF-alpha or IL1B. Mechanistically, sterically hinders the direct contact between the kinase domains of IKBKB in the IKK complex containing IKBKB, CHUK/IKKA and NEMO. The polypeptide is Protein OPG200 (OPG200) (Vaccinia virus (strain Western Reserve) (VACV)).